The sequence spans 388 residues: Deoxyguanosinetriphosphate triphosphohydrolase-like protein (388 aa).

A disordered region spans residues 1-32 (MSVGMAAPRAPYSCDPDRSRGRLFAEPPSRTR). An HD domain is found at 69-205 (RLTHSLEVAQ…AALADDIAYD (137 aa)).

This sequence belongs to the dGTPase family. Type 2 subfamily.

The polypeptide is Deoxyguanosinetriphosphate triphosphohydrolase-like protein (Bradyrhizobium sp. (strain ORS 278)).